We begin with the raw amino-acid sequence, 461 residues long: Serine incorporator 5 (461 aa).

The Extracellular segment spans residues Met-1–Arg-36. A helical transmembrane segment spans residues Phe-37 to Ser-57. Topologically, residues Val-58–Ser-90 are cytoplasmic. The helical transmembrane segment at Ala-91–Leu-111 threads the bilayer. Topologically, residues Lys-112–Asn-125 are extracellular. Asn-114 carries an N-linked (GlcNAc...) asparagine glycan. A helical membrane pass occupies residues Gly-126–Pro-146. Over Asp-147 to Tyr-157 the chain is Cytoplasmic. The helical transmembrane segment at Val-158–Ala-178 threads the bilayer. At His-179–Ser-200 the chain is on the extracellular side. Asn-184 carries N-linked (GlcNAc...) asparagine glycosylation. The helical transmembrane segment at Leu-201–Tyr-221 threads the bilayer. The Cytoplasmic segment spans residues Thr-222 to Lys-231. The helical transmembrane segment at Ile-232–Cys-252 threads the bilayer. The Extracellular segment spans residues Val-253–Ser-260. Residues Gly-261–Thr-281 traverse the membrane as a helical segment. Over Ser-282–Asn-312 the chain is Cytoplasmic. The chain crosses the membrane as a helical span at residues Met-313–Ser-333. At Thr-334–Ser-392 the chain is on the extracellular side. A helical membrane pass occupies residues Tyr-393–Phe-413. Topologically, residues His-414 to Thr-422 are cytoplasmic. Residues Phe-423–Leu-443 form a helical membrane-spanning segment. The Extracellular segment spans residues Tyr-444–Val-461.

The protein belongs to the TDE1 family.

It localises to the cell membrane. It carries out the reaction a 1,2-diacyl-sn-glycero-3-phospho-L-serine(in) = a 1,2-diacyl-sn-glycero-3-phospho-L-serine(out). The catalysed reaction is a 1,2-diacyl-sn-glycero-3-phosphocholine(in) = a 1,2-diacyl-sn-glycero-3-phosphocholine(out). It catalyses the reaction a 1,2-diacyl-sn-glycero-3-phosphoethanolamine(in) = a 1,2-diacyl-sn-glycero-3-phosphoethanolamine(out). In terms of biological role, restriction factor required to restrict infectivity of gammaretroviruses: acts by inhibiting an early step of viral infection. Impairs the penetration of the viral particle into the cytoplasm. Non-ATP-dependent, non-specific lipid transporter for phosphatidylserine, phosphatidylcholine, and phosphatidylethanolamine. Functions as a scramblase that flips lipids in both directions across the membrane. Phospholipid scrambling results in gammaretroviral surface exposure of phosphatidylserine and loss of membrane asymmetry, which leads to loss of infectivity. Enhances the incorporation of serine into phosphatidylserine and sphingolipids. May play a role in providing serine molecules for the formation of myelin glycosphingolipids in oligodendrocytes. The polypeptide is Serine incorporator 5 (Serinc5) (Mus musculus (Mouse)).